The primary structure comprises 455 residues: Glutamate--tRNA ligase (455 aa).

The 'HIGH' region signature appears at 8 to 18 (PSPTGYLHIGG). The 'KMSKS' region signature appears at 231-235 (RLSKR). Lys234 contributes to the ATP binding site.

The protein belongs to the class-I aminoacyl-tRNA synthetase family. Glutamate--tRNA ligase type 1 subfamily. As to quaternary structure, monomer.

It is found in the cytoplasm. It catalyses the reaction tRNA(Glu) + L-glutamate + ATP = L-glutamyl-tRNA(Glu) + AMP + diphosphate. In terms of biological role, catalyzes the attachment of glutamate to tRNA(Glu) in a two-step reaction: glutamate is first activated by ATP to form Glu-AMP and then transferred to the acceptor end of tRNA(Glu). The sequence is that of Glutamate--tRNA ligase from Vesicomyosocius okutanii subsp. Calyptogena okutanii (strain HA).